Here is a 196-residue protein sequence, read N- to C-terminus: MNLPYPIILASQSPRRRELLALTLLPFETMSVNTPETLNPTLSPEENVLAIAHEKADAVATILAHTKRQAIVLTADTMVAQGRHIFGKPSGFDEAFSMLQHLQGKTHQVHTGFTLRTPTINHSEYVTTHVTLNAMSSEAIAHYLHQQQPYDKAGSYGIQDPLMACHISSINGCYYNVVGLPLSRVWLALQAIIAQQ.

Asp-76 functions as the Proton acceptor in the catalytic mechanism.

It belongs to the Maf family. YhdE subfamily. The cofactor is a divalent metal cation.

It localises to the cytoplasm. The catalysed reaction is dTTP + H2O = dTMP + diphosphate + H(+). It catalyses the reaction UTP + H2O = UMP + diphosphate + H(+). Its function is as follows. Nucleoside triphosphate pyrophosphatase that hydrolyzes dTTP and UTP. May have a dual role in cell division arrest and in preventing the incorporation of modified nucleotides into cellular nucleic acids. This chain is dTTP/UTP pyrophosphatase, found in Chlorobium chlorochromatii (strain CaD3).